A 644-amino-acid polypeptide reads, in one-letter code: Protein cueball (644 aa).

Positions 1–26 are cleaved as a signal peptide; the sequence is MIRIRFGMDVLLVLLLATCLLTPAHG. At 27–531 the chain is on the extracellular side; the sequence is TPLEWDFAVT…VCLTPRVWTS (505 aa). 2 N-linked (GlcNAc...) asparagine glycosylation sites follow: asparagine 82 and asparagine 108. 3 LDL-receptor class B repeats span residues 121–166, 167–211, and 212–257; these read MNLF…DVCR, RKLY…DQLS, and DRLF…TNDA. 2 N-linked (GlcNAc...) asparagine glycosylation sites follow: asparagine 175 and asparagine 190. Positions 280-301 are disordered; the sequence is TTTSKPEEEDSTDSTDFTDPEP. Positions 286-301 are enriched in acidic residues; that stretch reads EEEDSTDSTDFTDPEP. The N-linked (GlcNAc...) asparagine glycan is linked to asparagine 313. EGF-like domains lie at 398-430 and 433-471; these read EIRE…FTGE and ELSV…ARCE. Disulfide bonds link cysteine 402/cysteine 411, cysteine 406/cysteine 421, cysteine 437/cysteine 447, cysteine 441/cysteine 459, and cysteine 461/cysteine 470. 2 N-linked (GlcNAc...) asparagine glycosylation sites follow: asparagine 473 and asparagine 508. The chain crosses the membrane as a helical span at residues 532-552; sequence SVIIILVVGIVSSLLLVAVIV. The Cytoplasmic segment spans residues 553 to 644; that stretch reads HGIRRLYKPK…LIHNMEDDLY (92 aa).

It belongs to the cueball family.

It is found in the cell membrane. Functionally, has a role in spermatogenesis and oogenesis. The protein is Protein cueball of Drosophila sechellia (Fruit fly).